The chain runs to 343 residues: Small ribosomal subunit biogenesis GTPase RsgA (343 aa).

The CP-type G domain maps to 116–275 (HGQLKPVAAN…LIDSPGIREF (160 aa)). Residues 163-166 (NKAD) and 217-225 (GQSGVGKSS) contribute to the GTP site. Zn(2+) contacts are provided by cysteine 299, cysteine 304, histidine 306, and cysteine 312.

The protein belongs to the TRAFAC class YlqF/YawG GTPase family. RsgA subfamily. In terms of assembly, monomer. Associates with 30S ribosomal subunit, binds 16S rRNA. The cofactor is Zn(2+).

The protein resides in the cytoplasm. Functionally, one of several proteins that assist in the late maturation steps of the functional core of the 30S ribosomal subunit. Helps release RbfA from mature subunits. May play a role in the assembly of ribosomal proteins into the subunit. Circularly permuted GTPase that catalyzes slow GTP hydrolysis, GTPase activity is stimulated by the 30S ribosomal subunit. The chain is Small ribosomal subunit biogenesis GTPase RsgA from Pseudomonas putida (strain ATCC 700007 / DSM 6899 / JCM 31910 / BCRC 17059 / LMG 24140 / F1).